A 210-amino-acid chain; its full sequence is Imidazole glycerol phosphate synthase subunit HisH (210 aa).

The 208-residue stretch at 3–210 folds into the Glutamine amidotransferase type-1 domain; that stretch reads TIAIIDYGMG…ILKNFALSKA (208 aa). The active-site Nucleophile is the Cys-81. Catalysis depends on residues His-190 and Glu-192.

In terms of assembly, heterodimer of HisH and HisF.

The protein localises to the cytoplasm. The enzyme catalyses 5-[(5-phospho-1-deoxy-D-ribulos-1-ylimino)methylamino]-1-(5-phospho-beta-D-ribosyl)imidazole-4-carboxamide + L-glutamine = D-erythro-1-(imidazol-4-yl)glycerol 3-phosphate + 5-amino-1-(5-phospho-beta-D-ribosyl)imidazole-4-carboxamide + L-glutamate + H(+). It catalyses the reaction L-glutamine + H2O = L-glutamate + NH4(+). The protein operates within amino-acid biosynthesis; L-histidine biosynthesis; L-histidine from 5-phospho-alpha-D-ribose 1-diphosphate: step 5/9. Its function is as follows. IGPS catalyzes the conversion of PRFAR and glutamine to IGP, AICAR and glutamate. The HisH subunit catalyzes the hydrolysis of glutamine to glutamate and ammonia as part of the synthesis of IGP and AICAR. The resulting ammonia molecule is channeled to the active site of HisF. The polypeptide is Imidazole glycerol phosphate synthase subunit HisH (Geobacter metallireducens (strain ATCC 53774 / DSM 7210 / GS-15)).